A 335-amino-acid chain; its full sequence is MLALGKLLELTLAGREPAEKTQLTVEGVRMRWLAEGALEVRPPQARDNGTDLLLSAGIHGNETAPIELLDELIRSIARGDLKPRARILFLFGNPAAMRLGARYVEQDVNRLFNGRHEQSGGAEALRACELERLAASFFSLPDRYRLHYDLHTAIRGSKIEQFALYPWKEGRQHSRFELARLRAAGISAVLLQNKPSIVFSAYTYEQLGAEAFTLELGKARPFGQNRHVNLAPLRLRLEQIIEGSEPQPDERLEGLQLFSVAREVIKRSDAFTFNLADDVENFSELEKGYVLAEDVSDSRWVVKEEGARIIFPNPKVKNGLRAGIVIVPADADGLG.

Zn(2+) is bound by residues histidine 59, glutamate 62, and histidine 151. The active site involves glutamate 215.

Belongs to the AspA/AstE family. Succinylglutamate desuccinylase subfamily. It depends on Zn(2+) as a cofactor.

The enzyme catalyses N-succinyl-L-glutamate + H2O = L-glutamate + succinate. It participates in amino-acid degradation; L-arginine degradation via AST pathway; L-glutamate and succinate from L-arginine: step 5/5. Transforms N(2)-succinylglutamate into succinate and glutamate. In Pseudomonas syringae pv. tomato (strain ATCC BAA-871 / DC3000), this protein is Succinylglutamate desuccinylase.